A 635-amino-acid chain; its full sequence is Glycosyltransferase-like protein gnt13 (635 aa).

Residues 1–18 (MNINTLIINFNKVKRMKN) lie on the Cytoplasmic side of the membrane. Residues 19 to 38 (FLILTLLVVMVVVFLQGPTL) traverse the membrane as a helical; Signal-anchor for type II membrane protein segment. Residues 39 to 635 (MINNSGQGMG…PNECFSDHHW (597 aa)) lie on the Extracellular side of the membrane. Residues N41 and N179 are each glycosylated (N-linked (GlcNAc...) asparagine). Disordered regions lie at residues 300–358 (NINN…NNID) and 389–458 (NIDN…NNEP). A compositionally biased stretch (low complexity) spans 389–456 (NIDNNNSNYN…NNNNNNNNNN (68 aa)). N-linked (GlcNAc...) asparagine glycosylation is found at N393 and N535.

Belongs to the glycosyltransferase 8 family. Highly divergent.

Its subcellular location is the membrane. This Dictyostelium discoideum (Social amoeba) protein is Glycosyltransferase-like protein gnt13 (gnt13).